The following is a 263-amino-acid chain: Putative SNAP25 homologous protein SNAP30 (263 aa).

Disordered stretches follow at residues 1 to 61 (MFGF…LQSQ) and 132 to 209 (NLGG…DGLS). Composition is skewed to polar residues over residues 8–34 (PGNNKLPNESSNNKGGTITAGRRTSSE) and 52–61 (FNDSGGLQSQ). Over residues 158–173 (KPSKKSENHKEEREKL) the composition is skewed to basic and acidic residues. The segment covering 180-194 (RSSSQPALDQPTNAL) has biased composition (polar residues). Residues 197–206 (VEQEKAKQDD) show a composition bias toward basic and acidic residues. Positions 198-260 (EQEKAKQDDG…QGANQRARHL (63 aa)) constitute a t-SNARE coiled-coil homology domain.

The protein belongs to the SNAP-25 family.

It localises to the membrane. The protein resides in the cytoplasm. Vesicle trafficking protein that functions in the secretory pathway. The protein is Putative SNAP25 homologous protein SNAP30 (SNAP30) of Arabidopsis thaliana (Mouse-ear cress).